Consider the following 195-residue polypeptide: ATP-dependent Clp protease proteolytic subunit 2 (195 aa).

Serine 92 acts as the Nucleophile in catalysis. Residue histidine 117 is part of the active site.

The protein belongs to the peptidase S14 family. As to quaternary structure, fourteen ClpP subunits assemble into 2 heptameric rings which stack back to back to give a disk-like structure with a central cavity, resembling the structure of eukaryotic proteasomes.

The protein localises to the cytoplasm. It carries out the reaction Hydrolysis of proteins to small peptides in the presence of ATP and magnesium. alpha-casein is the usual test substrate. In the absence of ATP, only oligopeptides shorter than five residues are hydrolyzed (such as succinyl-Leu-Tyr-|-NHMec, and Leu-Tyr-Leu-|-Tyr-Trp, in which cleavage of the -Tyr-|-Leu- and -Tyr-|-Trp bonds also occurs).. In terms of biological role, cleaves peptides in various proteins in a process that requires ATP hydrolysis. Has a chymotrypsin-like activity. Plays a major role in the degradation of misfolded proteins. This is ATP-dependent Clp protease proteolytic subunit 2 from Rhodococcus jostii (strain RHA1).